Here is a 198-residue protein sequence, read N- to C-terminus: ATP-dependent Clp protease proteolytic subunit (198 aa).

Residue S101 is the Nucleophile of the active site. H126 is a catalytic residue.

The protein belongs to the peptidase S14 family. As to quaternary structure, component of the chloroplastic Clp protease core complex.

The protein resides in the plastid. It localises to the chloroplast stroma. The catalysed reaction is Hydrolysis of proteins to small peptides in the presence of ATP and magnesium. alpha-casein is the usual test substrate. In the absence of ATP, only oligopeptides shorter than five residues are hydrolyzed (such as succinyl-Leu-Tyr-|-NHMec, and Leu-Tyr-Leu-|-Tyr-Trp, in which cleavage of the -Tyr-|-Leu- and -Tyr-|-Trp bonds also occurs).. In terms of biological role, cleaves peptides in various proteins in a process that requires ATP hydrolysis. Has a chymotrypsin-like activity. Plays a major role in the degradation of misfolded proteins. The polypeptide is ATP-dependent Clp protease proteolytic subunit (Psilotum nudum (Whisk fern)).